The chain runs to 296 residues: Acetylglutamate kinase (296 aa).

Residues Gly-68–Gly-69, Arg-90, and Asn-195 each bind substrate.

The protein belongs to the acetylglutamate kinase family. ArgB subfamily.

It localises to the cytoplasm. The catalysed reaction is N-acetyl-L-glutamate + ATP = N-acetyl-L-glutamyl 5-phosphate + ADP. The protein operates within amino-acid biosynthesis; L-arginine biosynthesis; N(2)-acetyl-L-ornithine from L-glutamate: step 2/4. Its function is as follows. Catalyzes the ATP-dependent phosphorylation of N-acetyl-L-glutamate. The sequence is that of Acetylglutamate kinase from Desulfotalea psychrophila (strain LSv54 / DSM 12343).